Here is an 858-residue protein sequence, read N- to C-terminus: Leucine--tRNA ligase (858 aa).

The 'HIGH' region motif lies at 53–63 (PYPSGNLHMGH). The 'KMSKS' region motif lies at 622 to 626 (KMSKS). An ATP-binding site is contributed by Lys625.

This sequence belongs to the class-I aminoacyl-tRNA synthetase family.

It localises to the cytoplasm. The enzyme catalyses tRNA(Leu) + L-leucine + ATP = L-leucyl-tRNA(Leu) + AMP + diphosphate. This chain is Leucine--tRNA ligase, found in Prochlorococcus marinus subsp. pastoris (strain CCMP1986 / NIES-2087 / MED4).